A 42-amino-acid chain; its full sequence is Serine/threonine-protein phosphatase 5 (42 aa).

A required for autoinhibition region spans residues 38-42 (QLGVM).

This sequence belongs to the PPP phosphatase family. PP-5 (PP-T) subfamily. Probably forms a complex composed of chaperones HSP90 and HSP70, co-chaperones STIP1/HOP, CDC37, PPP5C, PTGES3/p23, TSC1 and client protein TSC2. Probably forms a complex composed of chaperones HSP90 and HSP70, co-chaperones CDC37, PPP5C, TSC1 and client protein TSC2, CDK4, AKT, RAF1 and NR3C1; this complex does not contain co-chaperones STIP1/HOP and PTGES3/p23. Part of a complex with HSP90/HSP90AA1 and steroid receptors. Interacts (via TPR repeats) with HSP90AA1 (via TPR repeat-binding motif) or HSPA1A/HSPA1B; the interaction is direct and activates the phosphatase activity. Dissociates from HSPA1A/HSPA1B and HSP90AA1 in response to arachidonic acid. Interacts with CPNE1 (via VWFA domain). Interacts with CDC16, CDC27. Interacts with KLHDC10 (via the 6 Kelch repeats); inhibits the phosphatase activity on MAP3K5. Interacts with ATM and ATR; both interactions are induced by DNA damage and enhance ATM and ATR kinase activity. Interacts with RAD17; reduced by DNA damage. Interacts with nuclear receptors such as NR3C1/GCR and PPARG (activated by agonist); regulates their transactivation activities. Interacts (via TPR repeats) with S100 proteins S100A1, S100A2, S100A6, S100B and S100P; the interactions are calcium-dependent, strongly activate PPP5C phosphatase activity and compete with HSP90AA1 and MAP3K5 interactions. Interacts with SMAD2 and SMAD3 but not with SMAD1; decreases SMAD3 phosphorylation and protein levels. Interacts (via TPR repeats) with CRY1 and CRY2; the interaction with CRY2 down-regulates the phosphatase activity on CSNK1E. Interacts (via TPR repeats) with the active form of RAC1, GNA12 or GNA13; these interactions activate the phosphatase activity and translocate PPP5C to the cell membrane. Interacts with FLCN. The cofactor is Mg(2+). It depends on Mn(2+) as a cofactor. Activated by at least two different proteolytic cleavages producing a 56 kDa and a 50 kDa form.

It localises to the nucleus. Its subcellular location is the cytoplasm. It is found in the cell membrane. The catalysed reaction is O-phospho-L-seryl-[protein] + H2O = L-seryl-[protein] + phosphate. It catalyses the reaction O-phospho-L-threonyl-[protein] + H2O = L-threonyl-[protein] + phosphate. Autoinhibited. In the autoinhibited state, the TPR domain interacts with the catalytic region and prevents substrate access to the catalytic pocket. Allosterically activated by various polyunsaturated fatty acids, free long-chain fatty-acids and long-chain fatty acyl-CoA esters, arachidonic acid being the most effective activator. HSP90A and probably RAC1, GNA12 and GNA13 can also release the autoinhibition by the TPR repeat. Activation by RAC1, GNA12 and GNA13 is synergistic with the one produced by fatty acids binding. Inhibited by okadaic acid. Functionally, serine/threonine-protein phosphatase that dephosphorylates a myriad of proteins involved in different signaling pathways including the kinases CSNK1E, ASK1/MAP3K5, PRKDC and RAF1, the nuclear receptors NR3C1, PPARG, ESR1 and ESR2, SMAD proteins and TAU/MAPT. Implicated in wide ranging cellular processes, including apoptosis, differentiation, DNA damage response, cell survival, regulation of ion channels or circadian rhythms, in response to steroid and thyroid hormones, calcium, fatty acids, TGF-beta as well as oxidative and genotoxic stresses. Participates in the control of DNA damage response mechanisms such as checkpoint activation and DNA damage repair through, for instance, the regulation ATM/ATR-signaling and dephosphorylation of PRKDC and TP53BP1. Inhibits ASK1/MAP3K5-mediated apoptosis induced by oxidative stress. Plays a positive role in adipogenesis, mainly through the dephosphorylation and activation of PPARG transactivation function. Also dephosphorylates and inhibits the anti-adipogenic effect of NR3C1. Regulates the circadian rhythms, through the dephosphorylation and activation of CSNK1E. May modulate TGF-beta signaling pathway by the regulation of SMAD3 phosphorylation and protein expression levels. Dephosphorylates and may play a role in the regulation of TAU/MAPT. Through their dephosphorylation, may play a role in the regulation of ions channels such as KCNH2. Dephosphorylate FNIP1, disrupting interaction with HSP90AA1/Hsp90. This is Serine/threonine-protein phosphatase 5 (PPP5C) from Oryctolagus cuniculus (Rabbit).